A 605-amino-acid polypeptide reads, in one-letter code: Sulfite reductase [NADPH] flavoprotein alpha-component (605 aa).

Residues 70-208 (LTIIYASQTG…PAAEWRVKAL (139 aa)) form the Flavodoxin-like domain. Residues 76–81 (SQTGNA), 123–126 (STHG), and 159–168 (LGDSSYEFFC) each bind FMN. An FAD-binding FR-type domain is found at 240 to 454 (QNPYEATLLT…VEENNNFKLP (215 aa)). FAD-binding positions include Thr328, Gly362, 392–395 (RLYS), 410–412 (TVG), and 425–428 (GGAS). NADP(+) is bound by residues 525 to 526 (SR), 531 to 535 (KVYVQ), and Asp567. Tyr605 provides a ligand contact to FAD.

The protein belongs to the NADPH-dependent sulphite reductase flavoprotein subunit CysJ family. This sequence in the N-terminal section; belongs to the flavodoxin family. It in the C-terminal section; belongs to the flavoprotein pyridine nucleotide cytochrome reductase family. Alpha(8)-beta(8). The alpha component is a flavoprotein, the beta component is a hemoprotein. FAD serves as cofactor. The cofactor is FMN.

It carries out the reaction hydrogen sulfide + 3 NADP(+) + 3 H2O = sulfite + 3 NADPH + 4 H(+). Its pathway is sulfur metabolism; hydrogen sulfide biosynthesis; hydrogen sulfide from sulfite (NADPH route): step 1/1. Functionally, component of the sulfite reductase complex that catalyzes the 6-electron reduction of sulfite to sulfide. This is one of several activities required for the biosynthesis of L-cysteine from sulfate. The flavoprotein component catalyzes the electron flow from NADPH -&gt; FAD -&gt; FMN to the hemoprotein component. The protein is Sulfite reductase [NADPH] flavoprotein alpha-component of Photobacterium profundum (strain SS9).